We begin with the raw amino-acid sequence, 92 residues long: PqqA binding protein (92 aa).

Belongs to the PqqD family. In terms of assembly, monomer. Interacts with PqqE.

The protein operates within cofactor biosynthesis; pyrroloquinoline quinone biosynthesis. Its function is as follows. Functions as a PqqA binding protein and presents PqqA to PqqE, in the pyrroloquinoline quinone (PQQ) biosynthetic pathway. This chain is PqqA binding protein, found in Xanthomonas oryzae pv. oryzae (strain MAFF 311018).